The chain runs to 463 residues: Cysteine--tRNA ligase (463 aa).

Residue cysteine 27 participates in Zn(2+) binding. Positions 29–39 (MTVYDYCHLGH) match the 'HIGH' region motif. 3 residues coordinate Zn(2+): cysteine 208, histidine 233, and glutamate 237. Residues 265 to 269 (KMSKS) carry the 'KMSKS' region motif. Lysine 268 contacts ATP.

It belongs to the class-I aminoacyl-tRNA synthetase family. As to quaternary structure, monomer. It depends on Zn(2+) as a cofactor.

The protein resides in the cytoplasm. The enzyme catalyses tRNA(Cys) + L-cysteine + ATP = L-cysteinyl-tRNA(Cys) + AMP + diphosphate. The protein is Cysteine--tRNA ligase of Marinobacter nauticus (strain ATCC 700491 / DSM 11845 / VT8) (Marinobacter aquaeolei).